Here is a 346-residue protein sequence, read N- to C-terminus: NADH-quinone oxidoreductase subunit H (346 aa).

9 consecutive transmembrane segments (helical) span residues 13–33 (ILLILLQCLLLVVPLLVALAF), 51–71 (PNVVGAFGLLQSFADFLKYIV), 83–103 (AVYFLAPIVSLVMALIAWAVI), 116–136 (VAVLYVFAVSSLEVYGVIMGG), 162–182 (IGLIIIGVIISTGSMNFTAIV), 191–211 (LLNWYFLPHFPMLFLFFISAL), 244–264 (FMIGELVAVVLMCALTVLLFF), 278–298 (VFWMILKMLAVFFMFSMVKAI), and 310–330 (LGWKVFLPFSLFWVVFVAFMA).

Belongs to the complex I subunit 1 family. NDH-1 is composed of 14 different subunits. Subunits NuoA, H, J, K, L, M, N constitute the membrane sector of the complex.

The protein resides in the cell inner membrane. The enzyme catalyses a quinone + NADH + 5 H(+)(in) = a quinol + NAD(+) + 4 H(+)(out). In terms of biological role, NDH-1 shuttles electrons from NADH, via FMN and iron-sulfur (Fe-S) centers, to quinones in the respiratory chain. The immediate electron acceptor for the enzyme in this species is believed to be ubiquinone. Couples the redox reaction to proton translocation (for every two electrons transferred, four hydrogen ions are translocated across the cytoplasmic membrane), and thus conserves the redox energy in a proton gradient. This subunit may bind ubiquinone. This Jannaschia sp. (strain CCS1) protein is NADH-quinone oxidoreductase subunit H.